The sequence spans 746 residues: Stromal interaction molecule 2 (746 aa).

Positions 1–14 (MLVLGLLVAGAADG) are cleaved as a signal peptide. Residues 15 to 218 (CELVPRHLRG…RPPHNWMKDF (204 aa)) lie on the Extracellular side of the membrane. An EF-hand domain is found at 67–102 (FSLEALQTIHKQMDDDKDGGIEVEESDEFIREDMKY). 4 residues coordinate Ca(2+): Asp80, Asp82, Asp84, and Glu91. N-linked (GlcNAc...) asparagine glycosylation is present at Asn135. Residues 136–204 (WTLEDTLQWL…QLKALDVVLF (69 aa)) form the SAM domain. The helical transmembrane segment at 219 to 235 (ILTVSIVIGVGGCWFAY) threads the bilayer. Over 236-746 (TQNKTSKEHV…IKSLFKKKSK (511 aa)) the chain is Cytoplasmic. A coiled-coil region spans residues 247–394 (KMMKDLESLQ…EKIKKKRSTV (148 aa)). The segment at 483–562 (DLDEDTPPIV…SLPSPDPDIL (80 aa)) is disordered. Ser523 carries the post-translational modification Phosphoserine. Over residues 537-549 (HPSHPRHPHHPQH) the composition is skewed to basic residues. Phosphoserine is present on residues Ser609, Ser621, Ser640, Ser650, Ser661, Ser665, Ser680, and Ser697. Positions 685-746 (SSGIPVPKPR…IKSLFKKKSK (62 aa)) are disordered. Positions 723 to 732 (DLCHNGEKSK) are enriched in basic and acidic residues. Positions 733 to 746 (KPSKIKSLFKKKSK) are enriched in basic residues.

As to quaternary structure, oligomer with STIM1. Interacts with ORAI1. Glycosylated. In terms of processing, phosphorylated predominantly on Ser residues. Expressed in all tissues and tumor cell lines examined.

The protein resides in the endoplasmic reticulum membrane. Its function is as follows. Plays a role in mediating store-operated Ca(2+) entry (SOCE), a Ca(2+) influx following depletion of intracellular Ca(2+) stores. Functions as a highly sensitive Ca(2+) sensor in the endoplasmic reticulum which activates both store-operated and store-independent Ca(2+)-influx. Regulates basal cytosolic and endoplasmic reticulum Ca(2+) concentrations. Upon mild variations of the endoplasmic reticulum Ca(2+) concentration, translocates from the endoplasmic reticulum to the plasma membrane where it probably activates the Ca(2+) release-activated Ca(2+) (CRAC) channels ORAI1, ORAI2 and ORAI3. May inhibit STIM1-mediated Ca(2+) influx. This Homo sapiens (Human) protein is Stromal interaction molecule 2 (STIM2).